The sequence spans 172 residues: Adenine phosphoribosyltransferase (172 aa).

The protein belongs to the purine/pyrimidine phosphoribosyltransferase family. As to quaternary structure, homodimer.

It localises to the cytoplasm. It carries out the reaction AMP + diphosphate = 5-phospho-alpha-D-ribose 1-diphosphate + adenine. The protein operates within purine metabolism; AMP biosynthesis via salvage pathway; AMP from adenine: step 1/1. Its function is as follows. Catalyzes a salvage reaction resulting in the formation of AMP, that is energically less costly than de novo synthesis. The sequence is that of Adenine phosphoribosyltransferase from Alkaliphilus oremlandii (strain OhILAs) (Clostridium oremlandii (strain OhILAs)).